The primary structure comprises 492 residues: Catalase isozyme 1 (492 aa).

Active-site residues include His-65 and Asn-138. Tyr-348 is a binding site for heme.

The protein belongs to the catalase family. Homotetramer. It depends on heme as a cofactor.

The protein localises to the peroxisome. The catalysed reaction is 2 H2O2 = O2 + 2 H2O. Its function is as follows. Occurs in almost all aerobically respiring organisms and serves to protect cells from the toxic effects of hydrogen peroxide. The sequence is that of Catalase isozyme 1 (CAT1) from Solanum lycopersicum (Tomato).